Reading from the N-terminus, the 1192-residue chain is Coiled-coil domain-containing protein 40 (1192 aa).

5 disordered regions span residues 1–78 (MMDA…PGMD), 126–153 (KAKHRKVRPQAEVESTGRAAPEGELEVS), 173–196 (SSPEVSYSDISPLEMGEDDTNVSA), 211–246 (EPIEPTEPPEPAEPPKPAETPEDSTVRAPAHPYQRD), and 261–289 (GSLTPSDTDDLPLETDEPPQQESVQSTPR). Acidic residues predominate over residues 27–45 (PETEVEFIGETAPDTDVEF). Residues 215-228 (PTEPPEPAEPPKPA) are compositionally biased toward pro residues. The segment covering 267-279 (DTDDLPLETDEPP) has biased composition (acidic residues). The residue at position 306 (Ser306) is a Phosphoserine. Coiled coils occupy residues 308–369 (EALL…ATKQ), 425–451 (KTCQTANEERKKLAALQTEVESLALHL), 581–649 (DSEI…MLNK), 733–768 (NTNCKIDMHKKTLAEMDKEVKRFNDLITNSESEIAR), 830–871 (LQQE…KIAH), 919–972 (LRTL…EMRS), and 1044–1118 (QQRE…IVTL).

Belongs to the CCDC40 family. In terms of tissue distribution, specifically expressed in the embryonic node and midline.

It localises to the cytoplasm. The protein localises to the cell projection. It is found in the cilium. In terms of biological role, required for assembly of dynein regulatory complex (DRC) and inner dynein arm (IDA) complexes, which are responsible for ciliary beat regulation, thereby playing a central role in motility in cilia and flagella. Probably acts together with CCDC39 to form a molecular ruler that determines the 96 nanometer (nm) repeat length and arrangements of components in cilia and flagella. Not required for outer dynein arm complexes assembly. Required for axonemal recruitment of CCDC39. This Mus musculus (Mouse) protein is Coiled-coil domain-containing protein 40.